The primary structure comprises 474 residues: Adenosylhomocysteinase (474 aa).

Positions 61, 136, and 196 each coordinate substrate. Position 197–199 (Thr-197–Thr-199) interacts with NAD(+). Residues Lys-226 and Asp-230 each contribute to the substrate site. Residues Asn-231, Gly-260–Gly-265, Glu-283, Asn-318, Ile-339–His-341, and Asn-384 contribute to the NAD(+) site.

This sequence belongs to the adenosylhomocysteinase family. NAD(+) is required as a cofactor.

It is found in the cytoplasm. The enzyme catalyses S-adenosyl-L-homocysteine + H2O = L-homocysteine + adenosine. Its pathway is amino-acid biosynthesis; L-homocysteine biosynthesis; L-homocysteine from S-adenosyl-L-homocysteine: step 1/1. In terms of biological role, may play a key role in the regulation of the intracellular concentration of adenosylhomocysteine. This is Adenosylhomocysteinase from Ralstonia nicotianae (strain ATCC BAA-1114 / GMI1000) (Ralstonia solanacearum).